Here is a 438-residue protein sequence, read N- to C-terminus: UDP-N-acetylglucosamine 1-carboxyvinyltransferase (438 aa).

35–36 (KN) provides a ligand contact to phosphoenolpyruvate. Position 105 (Arg105) interacts with UDP-N-acetyl-alpha-D-glucosamine. Catalysis depends on Cys129, which acts as the Proton donor. 2-(S-cysteinyl)pyruvic acid O-phosphothioketal is present on Cys129. UDP-N-acetyl-alpha-D-glucosamine is bound by residues 134 to 138 (RPVDL), Asp321, and Val343.

This sequence belongs to the EPSP synthase family. MurA subfamily.

Its subcellular location is the cytoplasm. The enzyme catalyses phosphoenolpyruvate + UDP-N-acetyl-alpha-D-glucosamine = UDP-N-acetyl-3-O-(1-carboxyvinyl)-alpha-D-glucosamine + phosphate. It functions in the pathway cell wall biogenesis; peptidoglycan biosynthesis. Cell wall formation. Adds enolpyruvyl to UDP-N-acetylglucosamine. This Synechocystis sp. (strain ATCC 27184 / PCC 6803 / Kazusa) protein is UDP-N-acetylglucosamine 1-carboxyvinyltransferase.